Consider the following 506-residue polypeptide: MSFSVEVLAGIAIELQRGIGHQDRFQRLITTLRQVLACDASALLRYESRQFIPLAIDGLAQDVLGRRFTLEGHPRLEAIARAGDVVRFPADSDLPDPYDGLIPGQESLKVHACVGLPLFAGQNLIGALTLDAMTPEQFEVFSDEELRLVAALAAGALSNALLIEQLESQNMLPGSSGVFEPIKETHMIGLSPAMTQLKKEIEIVAGSDLNVLIGGETGTGKELVAKAIHQGSPRAVNPLVYLNCAALPESVAESELFGHVKGAFTGAISNRSGKFEMADNGTLFLDEIGELSLALQAKLLRVLQYGDIQRVGDDRSLRVDVRVLAATNRDLREEVLTGRFRADLFHRLSVFPLFVPPLRERGDDVVLLAGYFCEQCRLRLGLSRVVLSPDARRHLLNYGWPGNVRELEHAIHRAVVLARATRAGDEVILEAQHFALPEDVLPAPPAESFLALPTCRNLRESTENFQREMIRQALAQNNHNWAASARALETDVANLHRLAKRLGLKD.

Aspartate 57 is subject to 4-aspartylphosphate. Residues 187–416 (MIGLSPAMTQ…LEHAIHRAVV (230 aa)) enclose the Sigma-54 factor interaction domain. ATP-binding positions include 215–222 (GETGTGKE) and 278–287 (ADNGTLFLDE). Residues 481 to 500 (WAASARALETDVANLHRLAK) constitute a DNA-binding region (H-T-H motif).

Its pathway is nitrogen metabolism; nitric oxide reduction. Functionally, required for the expression of anaerobic nitric oxide (NO) reductase, acts as a transcriptional activator for at least the norVW operon. Activation also requires sigma-54. This Salmonella dublin (strain CT_02021853) protein is Anaerobic nitric oxide reductase transcription regulator NorR.